The primary structure comprises 480 residues: Uridine 5'-monophosphate synthase (480 aa).

Ala2 is modified (N-acetylalanine). The interval 2-214 (AAADALLGSL…AFVAANPNDS (213 aa)) is OPRTase. Tyr37 bears the Phosphotyrosine mark. Position 214 is a phosphoserine (Ser214). Positions 215–220 (LPSVKK) are domain linker. Positions 221–480 (EPKELSFGAR…WEAYLSRLAV (260 aa)) are OMPdecase. Orotidine 5'-phosphate is bound at residue Ser257. UMP-binding positions include Ser257, Asp259, and 281-283 (KIH). Residues Lys281, Lys314, Asp317, Thr321, Ser372, 430 to 432 (QQY), and 450 to 451 (GR) contribute to the orotidine 5'-phosphate site. Catalysis depends on for OMPdecase activity residues Lys314 and Asp317. UMP-binding positions include Asp317, Thr321, Ser372, 430–432 (QQY), and 450–451 (GR).

It in the N-terminal section; belongs to the purine/pyrimidine phosphoribosyltransferase family. In the C-terminal section; belongs to the OMP decarboxylase family. Homodimer; dimerization is required for enzymatic activity.

The enzyme catalyses orotidine 5'-phosphate + diphosphate = orotate + 5-phospho-alpha-D-ribose 1-diphosphate. The catalysed reaction is orotidine 5'-phosphate + H(+) = UMP + CO2. Its pathway is pyrimidine metabolism; UMP biosynthesis via de novo pathway; UMP from orotate: step 1/2. The protein operates within pyrimidine metabolism; UMP biosynthesis via de novo pathway; UMP from orotate: step 2/2. Functionally, bifunctional enzyme catalyzing the last two steps of de novo pyrimidine biosynthesis, orotate phosphoribosyltransferase (OPRT), which converts orotate to orotidine-5'-monophosphate (OMP), and orotidine-5'-monophosphate decarboxylase (ODC), the terminal enzymatic reaction that decarboxylates OMP to uridine monophosphate (UMP). This Bos taurus (Bovine) protein is Uridine 5'-monophosphate synthase (UMPS).